A 355-amino-acid chain; its full sequence is Protein-glutamate methylesterase/protein-glutamine glutaminase (355 aa).

In terms of domain architecture, Response regulatory spans 3–121 (NVLVVEDSPV…HPDHEATARK (119 aa)). D54 bears the 4-aspartylphosphate mark. One can recognise a CheB-type methylesterase domain in the interval 154–348 (PLLNRVAPAR…AALTNLVAER (195 aa)). Catalysis depends on residues S170, H197, and D290.

Belongs to the CheB family. Phosphorylated by CheA. Phosphorylation of the N-terminal regulatory domain activates the methylesterase activity.

The protein localises to the cytoplasm. The enzyme catalyses [protein]-L-glutamate 5-O-methyl ester + H2O = L-glutamyl-[protein] + methanol + H(+). It catalyses the reaction L-glutaminyl-[protein] + H2O = L-glutamyl-[protein] + NH4(+). Functionally, involved in chemotaxis. Part of a chemotaxis signal transduction system that modulates chemotaxis in response to various stimuli. Catalyzes the demethylation of specific methylglutamate residues introduced into the chemoreceptors (methyl-accepting chemotaxis proteins or MCP) by CheR. Also mediates the irreversible deamidation of specific glutamine residues to glutamic acid. This chain is Protein-glutamate methylesterase/protein-glutamine glutaminase, found in Nitrosospira multiformis (strain ATCC 25196 / NCIMB 11849 / C 71).